The primary structure comprises 687 residues: MTAQSLLQTTLFLLSLLFLVQGAHGRGHREDFRFCSQRNQTHRSSLHYKPTADLRISIENSEEALTVHAPFPAARPASQSFPDPRGLYHFCLYWNRHAGRLHLLYGKHDFLLSDKASSLLCFQHQEESLAQGPPLLATSVTSWWSPQNVSLPSAASFTFSFHSPPHTAAHNASVDMCELKRDLQLLSQFLKHPQKASRRPSAAPARQQLQSLESKLTSVRFTGDTVSFEEDRINATVWKLQPTAGLQDLHIHSRQEEEQSEILEYSVLLPRTLFQRTKGRRGEAEKRLLLVDFSSQALFQDKNSSQVLGEKVLGIVVQNTKVANLTEPVVLTFQHQLQPKNVTLQCVFWVEDPTLSSPGHWSSAGCETVRRETQTSCFCNHLTYFAVLMVSSVEVDAVHKHYLSLLSYVGCVVSALACIVTIAAYLCSRRKPRDYTIKVHMNLLLAVFLLDTSFLLSEPVALTGSEAGCRASAIFLHFSLLACLSWMGLEGYNLYRLVVEVFGTYVPGYLLKLSAMGWGFPIFLVTLVALVDVDNYGPIILAVHRTPEGVIYPSMCWIRDSLVSYITNLGLFSLVFLFNMAMLATMVVQILRLRPHTQKWSHVLTLLGLSLVLGLPWALIFFSFASGTFQLVVLYLFSIITSFQGFLIFIWYWSMRLQARGGPSPLKSNSDSARLPISSGSTSSSRI.

A signal peptide spans 1–25 (MTAQSLLQTTLFLLSLLFLVQGAHG). Position 26–33 (26–33 (RGHREDFR)) interacts with heparin. Residues 26 to 402 (RGHREDFRFC…VEVDAVHKHY (377 aa)) are Extracellular-facing. 2 disulfides stabilise this stretch: Cys35–Cys91 and Cys121–Cys177. N-linked (GlcNAc...) asparagine glycosylation is found at Asn39, Asn148, and Asn171. 190 to 200 (LKHPQKASRRP) serves as a coordination point for heparin. Residues 224–395 (DTVSFEEDRI…AVLMVSSVEV (172 aa)) form the GAIN-B domain. Asn234, Asn303, Asn324, and Asn341 each carry an N-linked (GlcNAc...) asparagine glycan. 2 disulfide bridges follow: Cys346-Cys377 and Cys366-Cys379. The GPS stretch occupies residues 346 to 395 (CVFWVEDPTLSSPGHWSSAGCETVRRETQTSCFCNHLTYFAVLMVSSVEV). A stachel region spans residues 384–397 (YFAVLMVSSVEVDA). A helical transmembrane segment spans residues 403-423 (LSLLSYVGCVVSALACIVTIA). Residues 424–442 (AYLCSRRKPRDYTIKVHMN) are Cytoplasmic-facing. A helical membrane pass occupies residues 443–463 (LLLAVFLLDTSFLLSEPVALT). The Extracellular portion of the chain corresponds to 464 to 470 (GSEAGCR). A helical transmembrane segment spans residues 471–491 (ASAIFLHFSLLACLSWMGLEG). At 492-512 (YNLYRLVVEVFGTYVPGYLLK) the chain is on the cytoplasmic side. Residues 513-533 (LSAMGWGFPIFLVTLVALVDV) form a helical membrane-spanning segment. At 534 to 570 (DNYGPIILAVHRTPEGVIYPSMCWIRDSLVSYITNLG) the chain is on the extracellular side. A helical membrane pass occupies residues 571–591 (LFSLVFLFNMAMLATMVVQIL). At 592-603 (RLRPHTQKWSHV) the chain is on the cytoplasmic side. The chain crosses the membrane as a helical span at residues 604–624 (LTLLGLSLVLGLPWALIFFSF). Residues 625–630 (ASGTFQ) lie on the Extracellular side of the membrane. A helical transmembrane segment spans residues 631 to 651 (LVVLYLFSIITSFQGFLIFIW). Topologically, residues 652–687 (YWSMRLQARGGPSPLKSNSDSARLPISSGSTSSSRI) are cytoplasmic. Positions 664–687 (SPLKSNSDSARLPISSGSTSSSRI) are disordered. Residues 678–687 (SSGSTSSSRI) are compositionally biased toward low complexity.

This sequence belongs to the G-protein coupled receptor 2 family. LN-TM7 subfamily. As to quaternary structure, heterodimer of 2 chains generated by proteolytic processing; the large extracellular N-terminal fragment (ADGRG1 NT) and the membrane-bound C-terminal fragment (ADGRG1-CT) predominantly remain associated and non-covalently linked. ADGRG1 NT self-associates in a trans-trans manner; the homophilic interaction enhances receptor signaling. Interacts with TGM2. Interacts with heparin; leading to the reduction of ADGRG1 shedding. Interacts with COL3A1. Part of a GPCR-tetraspanin complex at least consisting of ADGRG1, CD81, eventually CD9, and GNA11 in which CD81 is enhancing the association of ADGRG1 with GNA11. Post-translationally, autoproteolytically cleaved into 2 fragments; the large extracellular N-terminal fragment (ADGRG1 NT) and the membrane-bound C-terminal fragment (ADGRG1 CT) predominantly remain associated and non-covalently linked. Shedding to yield the secreted ADGRG1 N-terminal fragment seems to involve metalloprotease(s). In terms of processing, ubiquitinated. Undergoes polyubiquitination upon activation.

The protein resides in the cell membrane. Its subcellular location is the secreted. It is found in the membrane raft. Forms a heterodimer of 2 chains generated by proteolytic processing that remain associated through non-covalent interactions mediated by the GAIN-B domain. In the inactivated receptor, the Stachel sequence (also named stalk) is embedded in the GAIN-B domain, where it adopts a beta-strand conformation. On activation, the Stachel moves into the 7 transmembrane region and adopts a twisted hook-shaped configuration that forms contacts within the receptor, leading to coupling of a G-alpha protein, which activates signaling. The cleaved GAIN-B and N-terminal domains can then dissociate from the rest of the receptor. Its function is as follows. Adhesion G-protein coupled receptor (aGPCR) for steroid hormone 17alpha-hydroxypregnenolone (17-OH), which is involved in cell adhesion and cell-cell interactions. Ligand binding causes a conformation change that triggers signaling via guanine nucleotide-binding proteins (G proteins) and modulates the activity of downstream effectors, such as RhoA pathway. ADGRG1 is coupled to G(12) and/or G(13) G proteins (GNA12 and GNA13, respectively) and mediates the activation Rho small GTPases. Acts as a potent suppressor of ferroptosis: binding to 17-OH-binding initiates signaling that down-regulates CD36 and alleviates ferroptosis-induced liver injury. Ligand-binding also induces cell adhesion activity via association with proteins such as collagen III/COL3A1 and TGM2. Mediates cell matrix adhesion in developing neurons and hematopoietic stem cells. Involved in cortical development, specifically in maintenance of the pial basement membrane integrity and in cortical lamination: association with COL3A1 in the developing brain inhibits neuronal migration via activation of the RhoA pathway. Together with TGM2, acts as a regulator of myelination and myelin repair in oligodendrocyte precursor cells. Acts as a hemostatic sensor of shear force: G protein-coupled receptor signaling is activated in response to shear force in platelets, promoting G(13) G protein signaling, and platelet shape change and aggregation in a COL3A1-dependent manner. Acts as an inhibitor of VEGFA production thereby inhibiting angiogenesis through a signaling pathway mediated by PRKCA. Plays a role in the maintenance of hematopoietic stem cells in bone marrow niche. Plays an essential role in testis development. In Gorilla gorilla gorilla (Western lowland gorilla), this protein is Adhesion G-protein coupled receptor G1 (ADGRG1).